Reading from the N-terminus, the 702-residue chain is Pentatricopeptide repeat-containing protein At4g16390, chloroplastic (702 aa).

Residues 1 to 53 (MSFHHLCSSPSSLLHDPLPLCNLLSVYPKSTPRSFLSSYNPNSSHFHSRNLLQ) constitute a chloroplast transit peptide. PPR repeat units lie at residues 174 to 208 (EVILYNVTMKVFRKSKDLEKSEKLFDEMLERGIKP), 209 to 243 (DNATFTTIISCARQNGVPKRAVEWFEKMSSFGCEP), 244 to 278 (DNVTMAAMIDAYGRAGNVDMALSLYDRARTEKWRI), 279 to 313 (DAVTFSTLIRIYGVSGNYDGCLNIYEEMKALGVKP), 314 to 348 (NLVIYNRLIDSMGRAKRPWQAKIIYKDLITNGFTP), 349 to 383 (NWSTYAALVRAYGRARYGDDALAIYREMKEKGLSL), 384 to 414 (TVILYNTLLSMCADNRYVDEAFEIFQDMKNC), 420 to 454 (DSWTFSSLITVYACSGRVSEAEAALLQMREAGFEP), and 455 to 489 (TLFVLTSVIQCYGKAKQVDDVVRTFDQVLELGITP). The Smr domain occupies 603–688 (LHLKSLSLGA…WFLTTSVAAK (86 aa)).

The protein belongs to the PPR family. P subfamily. Expressed in leaves and flowers and at lower levels in stems and flower buds.

The protein localises to the plastid. It localises to the chloroplast. Involved in chloroplast RNA processing. Can bind RNA. Involved in chloroplast development. Involved in chloroplast ribosomal RNA (rRNA) processing and/or translation. Required for FtsH-mediated chloroplast biogenesis. Involved in translation and accumulation of chloroplast ATP synthase subunits. The polypeptide is Pentatricopeptide repeat-containing protein At4g16390, chloroplastic (Arabidopsis thaliana (Mouse-ear cress)).